Consider the following 425-residue polypeptide: Serine--tRNA ligase (425 aa).

231–233 (TAE) provides a ligand contact to L-serine. Residue 262–264 (RSE) coordinates ATP. L-serine is bound at residue Glu285. 349–352 (EISS) is an ATP binding site. Residue Ser385 coordinates L-serine.

Belongs to the class-II aminoacyl-tRNA synthetase family. Type-1 seryl-tRNA synthetase subfamily. In terms of assembly, homodimer. The tRNA molecule binds across the dimer.

It localises to the cytoplasm. The catalysed reaction is tRNA(Ser) + L-serine + ATP = L-seryl-tRNA(Ser) + AMP + diphosphate + H(+). It carries out the reaction tRNA(Sec) + L-serine + ATP = L-seryl-tRNA(Sec) + AMP + diphosphate + H(+). It participates in aminoacyl-tRNA biosynthesis; selenocysteinyl-tRNA(Sec) biosynthesis; L-seryl-tRNA(Sec) from L-serine and tRNA(Sec): step 1/1. Its function is as follows. Catalyzes the attachment of serine to tRNA(Ser). Is also able to aminoacylate tRNA(Sec) with serine, to form the misacylated tRNA L-seryl-tRNA(Sec), which will be further converted into selenocysteinyl-tRNA(Sec). The protein is Serine--tRNA ligase of Alkaliphilus oremlandii (strain OhILAs) (Clostridium oremlandii (strain OhILAs)).